The following is a 128-amino-acid chain: L-ectoine synthase (128 aa).

This sequence belongs to the ectoine synthase family.

It catalyses the reaction (2S)-4-acetamido-2-aminobutanoate = L-ectoine + H2O. It participates in amine and polyamine biosynthesis; ectoine biosynthesis; L-ectoine from L-aspartate 4-semialdehyde: step 3/3. Catalyzes the circularization of gamma-N-acetyl-alpha,gamma-diaminobutyric acid (ADABA) to ectoine (1,4,5,6-tetrahydro-2-methyl-4-pyrimidine carboxylic acid), which is an excellent osmoprotectant. This Vibrio parahaemolyticus serotype O3:K6 (strain RIMD 2210633) protein is L-ectoine synthase.